A 531-amino-acid chain; its full sequence is MDGIVTEVAVGVKRGSDELLSGSVLSSPNSNMSSMVVTANGNDSKKFKGEDKMDGAPSRVLHIRKLPGEVTETEVIALGLPFGKVTNILMLKGKNQAFLELATEEAAITMVNYYSAVTPHLRNQPIYIQYSNHKELKTDNTLNQRAQAVLQAVTAVQTANTPLSGTTVSESAVTPAQSPVLRIIIDNMYYPVTLDVLHQIFSKFGAVLKIITFTKNNQFQALLQYGDPVNAQQAKLALDGQNIYNACCTLRIDFSKLVNLNVKYNNDKSRDYTRPDLPSGDGQPALDPAIAAAFAKETSLLAVPGALSPLAIPNAAAAAAAAAAGRVGMPGVSAGGNTVLLVSNLNEEMVTPQSLFTLFGVYGDVQRVKILYNKKDSALIQMADGNQSQLAMNHLNGQKMYGKIIRVTLSKHQTVQLPREGLDDQGLTKDFGNSPLHRFKKPGSKNFQNIFPPSATLHLSNIPPSVAEEDLRTLFANTGGTVKAFKFFQDHKMALLQMATVEEAIQALIDLHNYNLGENHHLRVSFSKSTI.

Met-1 bears the N-acetylmethionine mark. A phosphoserine mark is found at Ser-26 and Ser-27. 2 consecutive RRM domains span residues 59–133 (RVLH…YSNH) and 181–257 (LRII…FSKL). At Ser-308 the chain carries Phosphoserine. RRM domains lie at 338-412 (TVLL…LSKH) and 455-529 (ATLH…FSKS).

In terms of assembly, monomer. Interacts with NOVA1; the interaction is direct. Identified in a mRNP complex, at least composed of DHX9, DDX3X, ELAVL1, HNRNPU, IGF2BP1, ILF3, PABPC1, PCBP2, PTBP2, STAU1, STAU2, SYNCRIP and YBX1. Part of a ternary complex containing KHSRP and HNRPH1. Interacts with NOVA2; the interaction is direct. As to expression, mainly expressed in brain although also detected in other tissues like heart and skeletal muscle. Isoform 1 and isoform 2 are specifically expressed in neuronal tissues. Isoform 3 and isoform 4 are expressed in non-neuronal tissues. Isoform 5 and isoform 6 are truncated forms expressed in non-neuronal tissues.

The protein resides in the nucleus. Functionally, RNA-binding protein which binds to intronic polypyrimidine tracts and mediates negative regulation of exons splicing. May antagonize in a tissue-specific manner the ability of NOVA1 to activate exon selection. In addition to its function in pre-mRNA splicing, plays also a role in the regulation of translation. Its function is as follows. Reduced affinity for RNA. The polypeptide is Polypyrimidine tract-binding protein 2 (Homo sapiens (Human)).